A 2186-amino-acid polypeptide reads, in one-letter code: Non-reducing polyketide synthase men2 (2186 aa).

One can recognise a Starter acyltransferase (SAT) domain in the interval 16–255 (FFGDQTVDAL…MQLPLGTPAH (240 aa)). Residues 382–815 (SNLIAVVGQS…GGNNCVLLEE (434 aa)) form the Ketosynthase family 3 (KS3) domain. Active-site for beta-ketoacyl synthase activity residues include Cys-554, His-690, and His-729. Residues 914–1204 (VFAFTGQGAQ…SSLVKSTLSA (291 aa)) enclose the Malonyl-CoA:ACP transacylase (MAT) domain. Residues 1299 to 1623 (TASLQQVRSE…TRRVLATVLG (325 aa)) form a product template (PT) domain region. Residues 1303–1434 (QQVRSEQING…CKLHFDKRGS (132 aa)) are N-terminal hotdog fold. One can recognise a PKS/mFAS DH domain in the interval 1303–1619 (QQVRSEQING…FQRLTRRVLA (317 aa)). Catalysis depends on His-1335, which acts as the Proton acceptor; for dehydratase activity. A C-terminal hotdog fold region spans residues 1463–1619 (TGHRLPKSVV…FQRLTRRVLA (157 aa)). Asp-1523 acts as the Proton donor; for dehydratase activity in catalysis. The region spanning 1666–1742 (VGDEKADAAI…GLRRAISELS (77 aa)) is the Carrier 1 domain. Ser-1702 carries the post-translational modification O-(pantetheine 4'-phosphoryl)serine. The disordered stretch occupies residues 1747–1785 (GPASGSVSVSSSATTTHGMTTPSSTSSAQSSQSSQTPDG). Low complexity predominate over residues 1749 to 1783 (ASGSVSVSSSATTTHGMTTPSSTSSAQSSQSSQTP). The 78-residue stretch at 1784–1861 (DGPGIYANAV…HVRRALGSDS (78 aa)) folds into the Carrier 2 domain. Ser-1821 bears the O-(pantetheine 4'-phosphoryl)serine mark. Residues 1857–1878 (LGSDSDGDSKPKSAPAPPAPEP) are disordered. The thioesterase (TE) domain stretch occupies residues 1921 to 2163 (LFFLPDGTGY…TMPCDHLSLL (243 aa)).

Requires pantetheine 4'-phosphate as cofactor.

The protein operates within secondary metabolite biosynthesis. Functionally, non-reducing polyketide synthase; part of the gene cluster that mediates the biosynthesis of menisporopsin A, a bioactive macrocyclic polylactone. The biosynthesis of menisporopsin A is performed by a reducing (man1) and a non-reducing (men2) polyketide synthase that catalyze the formation of each menisporopsin A subunits, while the esterification and cyclolactonization activities are probably peformed by the unusual thioesterase domain of men2. First, a reduced diketide intermediate, 3-hydroxybutyryl-S-ACP is produced by men1 and transferred to men2; this is followed by a second reduced diketide which is further elongated using 3 units of malonyl-coA to form a reduced pentaketide. The cyclization of this intermediate by the PT domain forms the second subunit, 2,4-dihydroxy-6-(2-hydroxy-n-propyl)benzoyl-S-ACP. The TE domain of men2 then esterifies the secondary hydroxyl group on the side chain of the second subunit with the acyl-TE of the first subunit to form the first ester intermediate. This process occurs iteratively to form a linear tetraester intermediate. The final subunit is formed by a similar process, except that an extra malonyl-CoA is required in an additional elongation step to form a reduced hexaketide intermediate, and the carbonyl group next to the secondary hydroxyl group is reduced by a trans-acting ketoreductase. Again, the PT domain catalyzes cyclization to form the largest subunit, 2,4-dihydroxy-6-(2,4-dihydroxy-n-pentyl) benzoyl-S-ACP. Then the linear pentaester intermediate is formed. In this step, if the intermediate transfer rate is slow, intra- molecular cyclization involving the secondary hydroxyl group of the pentaester intermediate may occur to form menisporopsin B. Alternatively, transfer of the pentaester intermediate to the TE domain would allow cyclolactonization to be catalyzed by the TE to form menisporopsin A. The sequence is that of Non-reducing polyketide synthase men2 from Menisporopsis theobromae.